A 123-amino-acid polypeptide reads, in one-letter code: Ribulose bisphosphate carboxylase small subunit, chloroplastic 1 (123 aa).

Met1 bears the Methionine derivative mark.

It belongs to the RuBisCO small chain family. As to quaternary structure, heterohexadecamer of 8 large and 8 small subunits.

Its subcellular location is the plastid. The protein localises to the chloroplast. Functionally, ruBisCO catalyzes two reactions: the carboxylation of D-ribulose 1,5-bisphosphate, the primary event in carbon dioxide fixation, as well as the oxidative fragmentation of the pentose substrate. Both reactions occur simultaneously and in competition at the same active site. Although the small subunit is not catalytic it is essential for maximal activity. This chain is Ribulose bisphosphate carboxylase small subunit, chloroplastic 1, found in Spinacia oleracea (Spinach).